Here is a 165-residue protein sequence, read N- to C-terminus: Type 3 secretion system regulator YopR (165 aa).

The protein belongs to the YopR family.

The protein resides in the secreted. May be involved in the regulation of the assembly of the type III secretion system (T3SS), also called injectisome, which is used to inject bacterial effector proteins into eukaryotic host cells. May control the secretion and/or polymerization of YscF/SctF, the principal component of the needle filament, thereby impacting the assembly of the T3SS. Involved in pathogenesis. The protein is Type 3 secretion system regulator YopR of Yersinia pseudotuberculosis serotype I (strain IP32953).